Reading from the N-terminus, the 176-residue chain is ATP-dependent protease subunit HslV (176 aa).

The active site involves T2. 3 residues coordinate Na(+): G157, C160, and T163.

Belongs to the peptidase T1B family. HslV subfamily. A double ring-shaped homohexamer of HslV is capped on each side by a ring-shaped HslU homohexamer. The assembly of the HslU/HslV complex is dependent on binding of ATP.

It localises to the cytoplasm. The enzyme catalyses ATP-dependent cleavage of peptide bonds with broad specificity.. Allosterically activated by HslU binding. Its function is as follows. Protease subunit of a proteasome-like degradation complex believed to be a general protein degrading machinery. This is ATP-dependent protease subunit HslV from Photorhabdus laumondii subsp. laumondii (strain DSM 15139 / CIP 105565 / TT01) (Photorhabdus luminescens subsp. laumondii).